The following is a 327-amino-acid chain: Small ribosomal subunit protein uS4m (327 aa).

The S4 RNA-binding domain maps to 96–154 (SRLDMSIHRALFASSALQARQLVLHGKVHVNGKPERRAYRQLLPGDLVTVDQKSVMNCV). Residues 156 to 173 (ASSNNTPSIQDGKQTEQV) are compositionally biased toward polar residues. The tract at residues 156 to 199 (ASSNNTPSIQDGKQTEQVSSKDGENEKKKDNDDDLFEQTSNGKL) is disordered. The segment covering 174–186 (SSKDGENEKKKDN) has biased composition (basic and acidic residues).

The protein belongs to the universal ribosomal protein uS4 family. In terms of assembly, component of the mitochondrial small ribosomal subunit (mt-SSU). Mature yeast 74S mitochondrial ribosomes consist of a small (37S) and a large (54S) subunit. The 37S small subunit contains a 15S ribosomal RNA (15S mt-rRNA) and at least 32 different proteins. The 54S large subunit contains a 21S rRNA (21S mt-rRNA) and at least 45 different proteins. uS3m, uS4m and uS5m form the narrow entry site of the mRNA channel.

The protein resides in the mitochondrion. Component of the mitochondrial ribosome (mitoribosome), a dedicated translation machinery responsible for the synthesis of mitochondrial genome-encoded proteins, including at least some of the essential transmembrane subunits of the mitochondrial respiratory chain. The mitoribosomes are attached to the mitochondrial inner membrane and translation products are cotranslationally integrated into the membrane. In Schizosaccharomyces pombe (strain 972 / ATCC 24843) (Fission yeast), this protein is Small ribosomal subunit protein uS4m (nam9).